Here is a 265-residue protein sequence, read N- to C-terminus: Shikimate dehydrogenase (NADP(+)) (265 aa).

Shikimate-binding positions include 15–17 and threonine 62; that span reads SKS. The active-site Proton acceptor is lysine 66. Shikimate contacts are provided by asparagine 87 and aspartate 102. NADP(+)-binding positions include 127–131, 151–156, and methionine 212; these read GAGGA and NRTVSR. Tyrosine 214 is a shikimate binding site. Glycine 234 serves as a coordination point for NADP(+).

It belongs to the shikimate dehydrogenase family. As to quaternary structure, homodimer.

It carries out the reaction shikimate + NADP(+) = 3-dehydroshikimate + NADPH + H(+). The protein operates within metabolic intermediate biosynthesis; chorismate biosynthesis; chorismate from D-erythrose 4-phosphate and phosphoenolpyruvate: step 4/7. In terms of biological role, involved in the biosynthesis of the chorismate, which leads to the biosynthesis of aromatic amino acids. Catalyzes the reversible NADPH linked reduction of 3-dehydroshikimate (DHSA) to yield shikimate (SA). The sequence is that of Shikimate dehydrogenase (NADP(+)) from Thiobacillus denitrificans (strain ATCC 25259 / T1).